Consider the following 824-residue polypeptide: Tuftelin-interacting protein 11 (824 aa).

The tract at residues 1–135 (MSMSHLYGKD…RTFAGGIKSN (135 aa)) is disordered. A compositionally biased stretch (acidic residues) spans 11–25 (EDSDGVEMENFEITD). Basic and acidic residues-rich tracts occupy residues 41 to 61 (QTKE…DERP) and 85 to 114 (PAAE…EAKK). The span at 122-135 (KPSQRTFAGGIKSN) shows a compositional bias: polar residues. The 47-residue stretch at 145–191 (TKGIGQKLLQKMGYMPGRGLGKNAQGIIAPIEAKQRRGKGAVGAYGS) folds into the G-patch domain.

This sequence belongs to the TFP11/STIP family. Identified in the spliceosome C complex.

It is found in the nucleus. Functionally, involved in pre-mRNA splicing, specifically in spliceosome disassembly during late-stage splicing events. The sequence is that of Tuftelin-interacting protein 11 (tfip11) from Xenopus laevis (African clawed frog).